The primary structure comprises 277 residues: S-formylglutathione hydrolase FrmB (277 aa).

Residues Ser145, Asp221, and His254 each act as charge relay system in the active site.

It belongs to the esterase D family.

The catalysed reaction is S-formylglutathione + H2O = formate + glutathione + H(+). Functionally, serine hydrolase involved in the detoxification of formaldehyde. Hydrolyzes S-formylglutathione to glutathione and formate. This is S-formylglutathione hydrolase FrmB (frmB) from Escherichia coli O157:H7.